A 141-amino-acid chain; its full sequence is Large ribosomal subunit protein uL11 (141 aa).

The protein belongs to the universal ribosomal protein uL11 family. In terms of assembly, part of the ribosomal stalk of the 50S ribosomal subunit. Interacts with L10 and the large rRNA to form the base of the stalk. L10 forms an elongated spine to which L12 dimers bind in a sequential fashion forming a multimeric L10(L12)X complex. One or more lysine residues are methylated.

Its function is as follows. Forms part of the ribosomal stalk which helps the ribosome interact with GTP-bound translation factors. The sequence is that of Large ribosomal subunit protein uL11 from Streptococcus pyogenes serotype M1.